Reading from the N-terminus, the 364-residue chain is L-carnitine dehydrogenase (364 aa).

An NAD(+)-binding site is contributed by Gly-11–Gly-16. The tract at residues Lys-336–Gly-364 is disordered. The segment covering Ala-348–Gly-364 has biased composition (basic residues).

Belongs to the 3-hydroxyacyl-CoA dehydrogenase family. L-carnitine dehydrogenase subfamily. In terms of assembly, homodimer.

Its subcellular location is the cytoplasm. The catalysed reaction is carnitine + NAD(+) = 3-dehydrocarnitine + NADH + H(+). It functions in the pathway amine and polyamine metabolism; carnitine metabolism. In terms of biological role, catalyzes the NAD(+)-dependent oxidation of L-carnitine to 3-dehydrocarnitine. The polypeptide is L-carnitine dehydrogenase (Mesorhizobium japonicum (strain LMG 29417 / CECT 9101 / MAFF 303099) (Mesorhizobium loti (strain MAFF 303099))).